We begin with the raw amino-acid sequence, 58 residues long: 6.8 kDa protein (58 aa).

This is 6.8 kDa protein from Satellite tobacco mosaic virus (STMV).